Reading from the N-terminus, the 360-residue chain is Peptide chain release factor 1 (360 aa).

Q235 carries the N5-methylglutamine modification.

Belongs to the prokaryotic/mitochondrial release factor family. Post-translationally, methylated by PrmC. Methylation increases the termination efficiency of RF1.

The protein resides in the cytoplasm. In terms of biological role, peptide chain release factor 1 directs the termination of translation in response to the peptide chain termination codons UAG and UAA. In Leptothrix cholodnii (strain ATCC 51168 / LMG 8142 / SP-6) (Leptothrix discophora (strain SP-6)), this protein is Peptide chain release factor 1.